The following is a 146-amino-acid chain: Large ribosomal subunit protein uL15 (146 aa).

The disordered stretch occupies residues 1 to 54; that stretch reads MTIKLHDLRPAPGSKTPRTRVGRGEGSKGKTAGRGTKGTKARKQVPTTFEGGQM.

The protein belongs to the universal ribosomal protein uL15 family. As to quaternary structure, part of the 50S ribosomal subunit.

In terms of biological role, binds to the 23S rRNA. This is Large ribosomal subunit protein uL15 from Mycobacterium marinum (strain ATCC BAA-535 / M).